The following is a 467-amino-acid chain: UDP-N-acetylmuramoylalanine--D-glutamate ligase (467 aa).

An ATP-binding site is contributed by 115–121; it reads GTDGKTT.

This sequence belongs to the MurCDEF family.

The protein localises to the cytoplasm. It catalyses the reaction UDP-N-acetyl-alpha-D-muramoyl-L-alanine + D-glutamate + ATP = UDP-N-acetyl-alpha-D-muramoyl-L-alanyl-D-glutamate + ADP + phosphate + H(+). The protein operates within cell wall biogenesis; peptidoglycan biosynthesis. Functionally, cell wall formation. Catalyzes the addition of glutamate to the nucleotide precursor UDP-N-acetylmuramoyl-L-alanine (UMA). The chain is UDP-N-acetylmuramoylalanine--D-glutamate ligase from Chlorobaculum parvum (strain DSM 263 / NCIMB 8327) (Chlorobium vibrioforme subsp. thiosulfatophilum).